A 119-amino-acid polypeptide reads, in one-letter code: Large ribosomal subunit protein bL20 (119 aa).

This sequence belongs to the bacterial ribosomal protein bL20 family.

Functionally, binds directly to 23S ribosomal RNA and is necessary for the in vitro assembly process of the 50S ribosomal subunit. It is not involved in the protein synthesizing functions of that subunit. The protein is Large ribosomal subunit protein bL20 of Laribacter hongkongensis (strain HLHK9).